A 356-amino-acid polypeptide reads, in one-letter code: Cysteine proteinase 3 (356 aa).

A signal peptide spans 1-16 (MSRLSLVLILVAGLFA). A propeptide spans 17–138 (TALAGPATFA…KGNLKLTNVV (122 aa)) (activation peptide). N-linked (GlcNAc...) asparagine glycosylation occurs at N123. 2 cysteine pairs are disulfide-bonded: C160–C203 and C194–C236. C163 is an active-site residue. N252 is a glycosylation site (N-linked (GlcNAc...) asparagine). Residues C294 and C344 are joined by a disulfide bond. Catalysis depends on residues H303 and N323.

It belongs to the peptidase C1 family. In terms of tissue distribution, predominantly expressed in stem and root.

The protein localises to the vacuole. This chain is Cysteine proteinase 3 (CYP-3), found in Solanum lycopersicum (Tomato).